Here is a 154-residue protein sequence, read N- to C-terminus: NADPH-dependent 7-cyano-7-deazaguanine reductase (154 aa).

The interval 1 to 24 is disordered; it reads MPKTDVSGLSQLGTKVDLPQSPEE. The active-site Thioimide intermediate is Cys-52. Catalysis depends on Asp-59, which acts as the Proton donor. Residues 74–76 and 93–94 each bind substrate; these read VES and HE.

Belongs to the GTP cyclohydrolase I family. QueF type 1 subfamily.

The protein localises to the cytoplasm. It catalyses the reaction 7-aminomethyl-7-carbaguanine + 2 NADP(+) = 7-cyano-7-deazaguanine + 2 NADPH + 3 H(+). The protein operates within tRNA modification; tRNA-queuosine biosynthesis. In terms of biological role, catalyzes the NADPH-dependent reduction of 7-cyano-7-deazaguanine (preQ0) to 7-aminomethyl-7-deazaguanine (preQ1). The protein is NADPH-dependent 7-cyano-7-deazaguanine reductase of Sinorhizobium fredii (strain NBRC 101917 / NGR234).